Consider the following 225-residue polypeptide: Cytidylate kinase (225 aa).

G12 to T20 contacts ATP.

This sequence belongs to the cytidylate kinase family. Type 1 subfamily.

Its subcellular location is the cytoplasm. It carries out the reaction CMP + ATP = CDP + ADP. The enzyme catalyses dCMP + ATP = dCDP + ADP. The chain is Cytidylate kinase from Stenotrophomonas maltophilia (strain K279a).